The sequence spans 159 residues: U1 small nuclear ribonucleoprotein C (159 aa).

The Matrin-type zinc-finger motif lies at 4–36 (FYCDYCDTYLTHDSPSVRKTHCSGRKHKENVKD). Y8 is modified (phosphotyrosine). Residue S17 is modified to Phosphoserine. Position 52 is an N6-acetyllysine (K52). Disordered regions lie at residues 62–96 (IPPT…PAPH) and 140–159 (RPPA…RPDR). Residues 63–92 (PPTPFSAPPPAGAMIPPPPSLPGPPRPGMM) are compositionally biased toward pro residues.

Belongs to the U1 small nuclear ribonucleoprotein C family. In terms of assembly, component of the U1 snRNP. The U1 snRNP is composed of the U1 snRNA and the 7 core Sm proteins SNRPB, SNRPD1, SNRPD2, SNRPD3, SNRPE, SNRPF and SNRPG that assemble in a heptameric protein ring on the Sm site of the small nuclear RNA to form the core snRNP, and at least 3 U1 snRNP-specific proteins SNRNP70/U1-70K, SNRPA/U1-A and SNRPC/U1-C. SNRPC/U1-C interacts with U1 snRNA and the 5' splice-site region of the pre-mRNA. Interacts (via N-terminus) with TIA1 (via C-terminus); thereby promoting spliceosomal U1 snRNP recruitment to 5' splice sites.

It localises to the nucleus. In terms of biological role, component of the spliceosomal U1 snRNP, which is essential for recognition of the pre-mRNA 5' splice-site and the subsequent assembly of the spliceosome. SNRPC/U1-C is directly involved in initial 5' splice-site recognition for both constitutive and regulated alternative splicing. The interaction with the 5' splice-site seems to precede base-pairing between the pre-mRNA and the U1 snRNA. Stimulates commitment or early (E) complex formation by stabilizing the base pairing of the 5' end of the U1 snRNA and the 5' splice-site region. In Homo sapiens (Human), this protein is U1 small nuclear ribonucleoprotein C.